The following is a 345-amino-acid chain: Tetraacyldisaccharide 4'-kinase (345 aa).

An ATP-binding site is contributed by 54–61 (TLGGAGKT).

It belongs to the LpxK family.

It catalyses the reaction a lipid A disaccharide + ATP = a lipid IVA + ADP + H(+). The protein operates within glycolipid biosynthesis; lipid IV(A) biosynthesis; lipid IV(A) from (3R)-3-hydroxytetradecanoyl-[acyl-carrier-protein] and UDP-N-acetyl-alpha-D-glucosamine: step 6/6. In terms of biological role, transfers the gamma-phosphate of ATP to the 4'-position of a tetraacyldisaccharide 1-phosphate intermediate (termed DS-1-P) to form tetraacyldisaccharide 1,4'-bis-phosphate (lipid IVA). The chain is Tetraacyldisaccharide 4'-kinase from Allorhizobium ampelinum (strain ATCC BAA-846 / DSM 112012 / S4) (Agrobacterium vitis (strain S4)).